A 202-amino-acid chain; its full sequence is Histone chaperone ASF1B (202 aa).

The segment at 1-155 is interaction with CHAF1B; that stretch reads MAKVSVLNVA…VTRFHINWDN (155 aa). An interaction with histone H3 region spans residues 1–156; that stretch reads MAKVSVLNVA…TRFHINWDNN (156 aa). S198 carries the phosphoserine; by TLK2 modification.

It belongs to the ASF1 family. As to quaternary structure, interacts with histone H3 (via C-terminus), including histone H3.1, H3.2 and H3.3, and histone H4; the interaction with H3 is direct. Interacts with the CHAF1A, CHAF1B and RBBP4 subunits of the CAF-1 complex. Interacts with HAT1, NASP and TAF1. Found in a soluble complex with NASP and histones H3 and H4; the interaction with NASP is probably indirect and mediated by H3-H4. Interacts with CDAN1. Found in a cytosolic complex with IPO4 and histones H3 and H4. Interacts with CREBBP. In terms of processing, phosphorylated by TLK1 and TLK2. In terms of tissue distribution, highly expressed in testis and at lower levels in colon, small intestine and thymus.

Its subcellular location is the nucleus. It localises to the cytoplasm. The protein localises to the cytosol. In terms of biological role, histone chaperone that facilitates histone deposition and histone exchange and removal during nucleosome assembly and disassembly. Cooperates with chromatin assembly factor 1 (CAF-1) to promote replication-dependent chromatin assembly. Also involved in the nuclear import of the histone H3-H4 dimer together with importin-4 (IPO4): specifically recognizes and binds newly synthesized histones with the monomethylation of H3 'Lys-9' (H3K9me1) and diacetylation at 'Lys-5' and 'Lys-12' of H4 (H4K5K12ac) marks in the cytosol. Does not participate in replication-independent nucleosome deposition which is mediated by ASF1A and HIRA. Required for gonad development. This chain is Histone chaperone ASF1B, found in Homo sapiens (Human).